The primary structure comprises 275 residues: Caspase-3 (275 aa).

An N-acetylmethionine modification is found at Met-1. 2 propeptides span residues 1-9 and 10-28; these read MENTENSVD and SKSIKTSETKILHGSKSMD. Lys-11 bears the N6-acetyllysine mark. Ser-26 is modified (phosphoserine). Active-site residues include His-121 and Cys-163. Cys-163 bears the S-nitrosocysteine; in inhibited form mark.

This sequence belongs to the peptidase C14A family. As to quaternary structure, heterotetramer that consists of two anti-parallel arranged heterodimers, each one formed by a 17 kDa (p17) and a 12 kDa (p12) subunit. Interacts with BIRC6/bruce. Post-translationally, cleavage by granzyme B, caspase-6, caspase-8 and caspase-10 generates the two active subunits. Additional processing of the propeptides is likely due to the autocatalytic activity of the activated protease. Active heterodimers between the small subunit of caspase-7 protease and the large subunit of caspase-3 also occur and vice versa. S-nitrosylated on its catalytic site cysteine in unstimulated cell lines and denitrosylated upon activation of the Fas apoptotic pathway, associated with an increase in intracellular caspase activity. Fas therefore activates caspase-3 not only by inducing the cleavage of the caspase zymogen to its active subunits, but also by stimulating the denitrosylation of its active site thiol. In terms of processing, ubiquitinated by BIRC6; this activity is inhibited by DIABLO/SMAC.

The protein localises to the cytoplasm. It carries out the reaction Strict requirement for an Asp residue at positions P1 and P4. It has a preferred cleavage sequence of Asp-Xaa-Xaa-Asp-|- with a hydrophobic amino-acid residue at P2 and a hydrophilic amino-acid residue at P3, although Val or Ala are also accepted at this position.. With respect to regulation, inhibited by BIRC6; following inhibition of BIRC6-caspase binding by DIABLO/SMAC, BIRC6 is subjected to caspase cleavage, leading to an increase in active caspases. Functionally, involved in the activation cascade of caspases responsible for apoptosis execution. At the onset of apoptosis, it proteolytically cleaves poly(ADP-ribose) polymerase PARP1 at a '216-Asp-|-Gly-217' bond. Cleaves and activates sterol regulatory element binding proteins (SREBPs) between the basic helix-loop-helix leucine zipper domain and the membrane attachment domain. Cleaves and activates caspase-6, -7 and -9 (CASP6, CASP7 and CASP9, respectively). Cleaves and inactivates interleukin-18 (IL18). Triggers cell adhesion in sympathetic neurons through RET cleavage. Cleaves IL-1 beta between an Asp and an Ala, releasing the mature cytokine which is involved in a variety of inflammatory processes. Cleaves and inhibits serine/threonine-protein kinase AKT1 in response to oxidative stress. Acts as an inhibitor of type I interferon production during virus-induced apoptosis by mediating cleavage of antiviral proteins CGAS, IRF3 and MAVS, thereby preventing cytokine overproduction. Also involved in pyroptosis by mediating cleavage and activation of gasdermin-E (GSDME). Cleaves XRCC4 and phospholipid scramblase proteins XKR4, XKR8 and XKR9, leading to promote phosphatidylserine exposure on apoptotic cell surface. Cleaves BIRC6 following inhibition of BIRC6-caspase binding by DIABLO/SMAC. This Bos taurus (Bovine) protein is Caspase-3 (CASP3).